The sequence spans 232 residues: 2,3,4,5-tetrahydropyridine-2,6-dicarboxylate N-acetyltransferase (232 aa).

This sequence belongs to the transferase hexapeptide repeat family. DapH subfamily.

The catalysed reaction is (S)-2,3,4,5-tetrahydrodipicolinate + acetyl-CoA + H2O = L-2-acetamido-6-oxoheptanedioate + CoA. It functions in the pathway amino-acid biosynthesis; L-lysine biosynthesis via DAP pathway; LL-2,6-diaminopimelate from (S)-tetrahydrodipicolinate (acetylase route): step 1/3. Functionally, catalyzes the transfer of an acetyl group from acetyl-CoA to tetrahydrodipicolinate. In Streptococcus thermophilus (strain CNRZ 1066), this protein is 2,3,4,5-tetrahydropyridine-2,6-dicarboxylate N-acetyltransferase.